Here is a 184-residue protein sequence, read N- to C-terminus: ATP synthase subunit b, chloroplastic (184 aa).

A helical membrane pass occupies residues 27–49 (LATNPINLSVVFGVLIFFGKGVL).

This sequence belongs to the ATPase B chain family. In terms of assembly, F-type ATPases have 2 components, F(1) - the catalytic core - and F(0) - the membrane proton channel. F(1) has five subunits: alpha(3), beta(3), gamma(1), delta(1), epsilon(1). F(0) has four main subunits: a(1), b(1), b'(1) and c(10-14). The alpha and beta chains form an alternating ring which encloses part of the gamma chain. F(1) is attached to F(0) by a central stalk formed by the gamma and epsilon chains, while a peripheral stalk is formed by the delta, b and b' chains.

It localises to the plastid. Its subcellular location is the chloroplast thylakoid membrane. In terms of biological role, f(1)F(0) ATP synthase produces ATP from ADP in the presence of a proton or sodium gradient. F-type ATPases consist of two structural domains, F(1) containing the extramembraneous catalytic core and F(0) containing the membrane proton channel, linked together by a central stalk and a peripheral stalk. During catalysis, ATP synthesis in the catalytic domain of F(1) is coupled via a rotary mechanism of the central stalk subunits to proton translocation. Its function is as follows. Component of the F(0) channel, it forms part of the peripheral stalk, linking F(1) to F(0). This Olimarabidopsis pumila (Dwarf rocket) protein is ATP synthase subunit b, chloroplastic.